The following is a 99-amino-acid chain: MSRGHQTQEVRRVRTPRRGEIPGVVEQIMGHGKLKVRCADGHIRLGRIPGKMKKRIWIREGDVVLVKPWEFQSEEKADIVWRYTRTESNWLERKGYLKL.

One can recognise an S1-like domain in the interval 11–84 (RRVRTPRRGE…EKADIVWRYT (74 aa)).

This sequence belongs to the eIF-1A family.

Its function is as follows. Seems to be required for maximal rate of protein biosynthesis. Enhances ribosome dissociation into subunits and stabilizes the binding of the initiator Met-tRNA(I) to 40 S ribosomal subunits. This is Translation initiation factor 1A (eIF1A) from Methanothermobacter thermautotrophicus (strain ATCC 29096 / DSM 1053 / JCM 10044 / NBRC 100330 / Delta H) (Methanobacterium thermoautotrophicum).